The sequence spans 366 residues: tRNA-specific 2-thiouridylase MnmA (366 aa).

Residues 12-19 (GMSGGVDS) and methionine 38 contribute to the ATP site. The interval 98 to 100 (NPD) is interaction with target base in tRNA. Cysteine 103 functions as the Nucleophile in the catalytic mechanism. A disulfide bridge links cysteine 103 with cysteine 200. Glycine 128 contacts ATP. The interaction with tRNA stretch occupies residues 150-152 (KDQ). Cysteine 200 (cysteine persulfide intermediate) is an active-site residue. Residues 312–313 (RY) are interaction with tRNA.

This sequence belongs to the MnmA/TRMU family.

The protein resides in the cytoplasm. It catalyses the reaction S-sulfanyl-L-cysteinyl-[protein] + uridine(34) in tRNA + AH2 + ATP = 2-thiouridine(34) in tRNA + L-cysteinyl-[protein] + A + AMP + diphosphate + H(+). Functionally, catalyzes the 2-thiolation of uridine at the wobble position (U34) of tRNA, leading to the formation of s(2)U34. This Pseudoalteromonas translucida (strain TAC 125) protein is tRNA-specific 2-thiouridylase MnmA.